The primary structure comprises 1163 residues: Zinc finger protein 516 (1163 aa).

Basic and acidic residues predominate over residues 1–13 (MDRNREAEMELRR). Positions 1-26 (MDRNREAEMELRRGPSPTRAGRGHEV) are disordered. A mediates promoter DNA-binding and activation of transcription region spans residues 1-431 (MDRNREAEME…ATRGKVAEPA (431 aa)). 7 consecutive C2H2-type zinc fingers follow at residues 34-56 (HTCC…MRKH), 62-84 (YKCP…IRSH), 174-197 (VQCS…HQAH), 200-223 (FKCR…ERDH), 248-270 (FPCE…MKKH), 276-298 (HGCH…MKAH), and 335-357 (EVCA…NAIH). Positions 460–469 (SQEKRKREQD) are enriched in basic and acidic residues. Disordered stretches follow at residues 460 to 512 (SQEK…TGQG), 533 to 667 (HSRV…QEQH), and 679 to 730 (HPKQ…APDL). Residues 496–507 (RSAARPNRRAAA) show a composition bias toward low complexity. The segment at 515–537 (SECFECGKIFRTYHQMVLHSRVH) adopts a C2H2-type 8 zinc-finger fold. A compositionally biased stretch (basic and acidic residues) spans 542–552 (RERDSDGDRAA). Polar residues predominate over residues 561–572 (EGDSASQPSSPG). Over residues 588–598 (EAAEDSGEEGA) the composition is skewed to acidic residues. Residues 615–625 (EVTSTELSSGD) are compositionally biased toward polar residues. Over residues 626–641 (QSHKMGDNASERDTGE) the composition is skewed to basic and acidic residues. Lys-643 is covalently cross-linked (Glycyl lysine isopeptide (Lys-Gly) (interchain with G-Cter in SUMO2)). The span at 656-667 (SSRETSRRQEQH) shows a compositional bias: basic and acidic residues. Lys-681 participates in a covalent cross-link: Glycyl lysine isopeptide (Lys-Gly) (interchain with G-Cter in SUMO2). Residues 706–720 (PAEKLSDLHNKEHSG) are compositionally biased toward basic and acidic residues. A C2H2-type 9; atypical zinc finger spans residues 760 to 783 (HPCPYCSHKTYYPEVLWMHKRIWH). Residues 838–1007 (TQVPGGMPGS…PPREPPSKAA (170 aa)) form a disordered region. The segment covering 840–857 (VPGGMPGSKSGSSPLGVV) has biased composition (low complexity). Residues Lys-1043 and Lys-1062 each participate in a glycyl lysine isopeptide (Lys-Gly) (interchain with G-Cter in SUMO2) cross-link. Residues 1098–1120 (FVCIECGKSFHQPGHLRAHMRAH) form a C2H2-type 10 zinc finger. The disordered stretch occupies residues 1126–1163 (SDGPRGSEVHTTSADAPKQGRDHSNTGTVQTVPLRKGT).

The protein belongs to the krueppel C2H2-type zinc-finger protein family. Interacts with PRDM16; the interaction is direct and may play a role in the transcription of brown adipose tissue-specific genes. Interacts with PWWP2B. Interacts with HDAC1; this interaction is enhanced in the presence of PWWP2B.

Its subcellular location is the nucleus. Its function is as follows. Transcriptional regulator that binds to the promoter and activates the transcription of genes promoting brown adipose tissue (BAT) differentiation. Among brown adipose tissue-specific genes, binds the proximal region of the promoter of the UCP1 gene to activate its transcription and thereby regulate thermogenesis. May also play a role in the cellular response to replication stress. The polypeptide is Zinc finger protein 516 (Homo sapiens (Human)).